A 352-amino-acid polypeptide reads, in one-letter code: Phosphoribosylformylglycinamidine cyclo-ligase (352 aa).

It belongs to the AIR synthase family.

It localises to the cytoplasm. The enzyme catalyses 2-formamido-N(1)-(5-O-phospho-beta-D-ribosyl)acetamidine + ATP = 5-amino-1-(5-phospho-beta-D-ribosyl)imidazole + ADP + phosphate + H(+). It functions in the pathway purine metabolism; IMP biosynthesis via de novo pathway; 5-amino-1-(5-phospho-D-ribosyl)imidazole from N(2)-formyl-N(1)-(5-phospho-D-ribosyl)glycinamide: step 2/2. This is Phosphoribosylformylglycinamidine cyclo-ligase from Coxiella burnetii (strain RSA 331 / Henzerling II).